A 192-amino-acid polypeptide reads, in one-letter code: Putative 3-methyladenine DNA glycosylase (192 aa).

The protein belongs to the DNA glycosylase MPG family.

In Bdellovibrio bacteriovorus (strain ATCC 15356 / DSM 50701 / NCIMB 9529 / HD100), this protein is Putative 3-methyladenine DNA glycosylase.